An 847-amino-acid chain; its full sequence is Endo-beta-N-acetylglucosaminidase EndoSd (847 aa).

Residues 1 to 36 (MDKRLLVKRTLGCVCAATLMGAILATHHDSLISVKA) form the signal peptide. Residues 65–377 (PLYAGYFRTW…HPVVDNISHT (313 aa)) form the GH18 domain. Residue histidine 107 coordinates a glycoprotein. The active-site Proton donor is the glutamate 186. Residues glutamate 188, glutamine 250, tyrosine 252, glutamate 288, glutamate 289, asparagine 295, and tyrosine 339 each contribute to the a glycoprotein site. LRR repeat units lie at residues 423-446 (LERYNKTLVLTVDKIHSLKGLEKL), 447-470 (SHLQKLELCQLSNVKEVTPDILPE), 483-506 (MTGLEKLNLRGLNRQTLDGIDVNG), and 507-530 (LTHLTSFDISHNSLDLSEKSADRK). The interval 683–836 (MENLAKGAKV…YTELQILGQR (154 aa)) is carbohydrate-binding module (CBM). The Ca(2+) site is built by lysine 704, aspartate 707, and glutamate 829.

It belongs to the glycosyl hydrolase 18 family.

The protein resides in the secreted. Its subcellular location is the host extracellular space. The enzyme catalyses an N(4)-(oligosaccharide-(1-&gt;3)-[oligosaccharide-(1-&gt;6)]-beta-D-Man-(1-&gt;4)-beta-D-GlcNAc-(1-&gt;4)-alpha-D-GlcNAc)-L-asparaginyl-[protein] + H2O = an oligosaccharide-(1-&gt;3)-[oligosaccharide-(1-&gt;6)]-beta-D-Man-(1-&gt;4)-D-GlcNAc + N(4)-(N-acetyl-beta-D-glucosaminyl)-L-asparaginyl-[protein]. Its function is as follows. Endoglucosidase that acts as a host immune evasion factor by mediating hydrolysis of the N-linked glycan from the Fc region of host immunoglobulin-gamma (IgG) during infection. Specifically catalyzes the hydrolysis of the beta-1,4 linkage between the first two N-acetylglucosamine residues of the complex-type N-linked glycan located on 'Asn-297' of the Fc region of IgG antibodies (IGHG1, IGHG2, IGHG3 or IGHG4), thereby preventing interaction between IgGs and Fc receptors and ability to activate the complement pathway. Shows a specificity for biantennary complex type N-glycans; does neither cleave larger complex type glycans nor oligomannose and nor hybrid-type glycans. Specifically acts on IgGs; does not act on immunoglobulin alpha, beta, delta or mu. This chain is Endo-beta-N-acetylglucosaminidase EndoSd, found in Streptococcus dysgalactiae.